We begin with the raw amino-acid sequence, 306 residues long: Glutamyl-Q tRNA(Asp) synthetase (306 aa).

Residues 29-33 and D65 contribute to the L-glutamate site; that span reads RFAPS. A 'HIGH' region motif is present at residues 32–42; it reads PSPTGPLHLGN. Residues C121, C123, Y141, and C145 each contribute to the Zn(2+) site. Y188 and R206 together coordinate L-glutamate. The short motif at 244 to 248 is the 'KMSKS' region element; sequence KLAKR. Residue K247 coordinates ATP.

The protein belongs to the class-I aminoacyl-tRNA synthetase family. GluQ subfamily. The cofactor is Zn(2+).

Functionally, catalyzes the tRNA-independent activation of glutamate in presence of ATP and the subsequent transfer of glutamate onto a tRNA(Asp). Glutamate is transferred on the 2-amino-5-(4,5-dihydroxy-2-cyclopenten-1-yl) moiety of the queuosine in the wobble position of the QUC anticodon. The polypeptide is Glutamyl-Q tRNA(Asp) synthetase (Prochlorococcus marinus (strain MIT 9303)).